A 342-amino-acid polypeptide reads, in one-letter code: Alpha-(1,3)-fucosyltransferase 7 (342 aa).

Over 1–14 the chain is Cytoplasmic; that stretch reads MNNAGHGPTRRLRG. The helical; Signal-anchor for type II membrane protein transmembrane segment at 15–36 threads the bilayer; sequence LGVLAGVALLAALWLLWLLGSA. Residues 37-342 are Lumenal-facing; the sequence is PRGTPAPQPT…YEDLEGWFQA (306 aa). The cysteines at positions 68 and 76 are disulfide-linked. An N-linked (GlcNAc...) asparagine glycan is attached at N81. C211 and C214 are oxidised to a cystine. N291 is a glycosylation site (N-linked (GlcNAc...) asparagine). A disulfide bond links C318 and C321.

The protein belongs to the glycosyltransferase 10 family. N-glycosylated. Leukocytic/myeloid lineage cells.

It localises to the golgi apparatus. The protein resides in the golgi stack membrane. The enzyme catalyses an N-acetyl-alpha-neuraminyl-(2-&gt;3)-beta-D-galactosyl-(1-&gt;4)-N-acetyl-beta-D-glucosaminyl derivative + GDP-beta-L-fucose = an alpha-Neu5Ac-(2-&gt;3)-beta-D-Gal-(1-&gt;4)-[alpha-L-Fuc-(1-&gt;3)]-beta-D-GlcNAc derivative + GDP + H(+). It carries out the reaction a neolactoside IV(3)-alpha-NeuAc-nLc4Cer + GDP-beta-L-fucose = a neolactoside IV(3)-alpha-NeuNAc,III(3)-alpha-Fuc-nLc4Cer + GDP + H(+). The catalysed reaction is a neolactoside VI(3)-alpha-NeuNAc-nLc6Cer + GDP-beta-L-fucose = a neolactoside VI(3)-alpha-NeuAc,V(3)-alphaFuc-nLc6Cer + GDP + H(+). It catalyses the reaction an alpha-Neu5Ac-(2-&gt;3)-beta-D-Gal-(1-&gt;4)-beta-D-GlcNAc-(1-&gt;3)-beta-D-Gal-(1-&gt;4)-[alpha-L-Fuc-(1-&gt;3)]-beta-D-GlcNAc derivative + GDP-beta-L-fucose = an alpha-Neu5Ac-(2-&gt;3)-beta-D-Gal-(1-&gt;4)-[alpha-L-Fuc-(1-&gt;3)]-beta-D-GlcNAc-(1-&gt;3)-beta-D-Gal-(1-&gt;4)-[alpha-L-Fuc-(1-&gt;3)]-beta-D-GlcNAc derivative + GDP + H(+). The enzyme catalyses an alpha-Neu5Ac-(2-&gt;3)-beta-D-Gal-(1-&gt;4)-beta-D-GlcNAc6S derivative + GDP-beta-L-fucose = an alpha-Neu5Ac-(2-&gt;3)-beta-D-Gal-(1-&gt;4)-[alpha-L-Fuc-(1-&gt;3)]-beta-D-GlcNAc6S derivative + GDP + H(+). It carries out the reaction alpha-Neu5Ac-(2-&gt;3)-beta-D-Gal-(1-&gt;4)-beta-D-GlcNAc-(1-&gt;3)-beta-D-Gal-(1-&gt;4)-D-Glc + GDP-beta-L-fucose = alpha-Neu5Ac-(2-&gt;3)-beta-D-Gal-(1-&gt;4)-[alpha-L-Fuc-(1-&gt;3)]-beta-D-GlcNAc-(1-&gt;3)-beta-D-Gal-(1-&gt;4)-D-Glc + GDP + H(+). The catalysed reaction is alpha-Neu5Ac-(2-&gt;3)-beta-D-Gal-(1-&gt;4)-beta-D-GlcNAc-(1-&gt;3)-beta-D-Gal-(1-&gt;4)-[alpha-L-Fuc-(1-&gt;3)]-beta-D-GlcNAc-(1-&gt;3)-beta-D-Gal-(1-&gt;4)-beta-D-GlcNAc + GDP-beta-L-fucose = alpha-Neu5Ac-(2-&gt;3)-beta-D-Gal-(1-&gt;4)-[alpha-L-Fuc-(1-&gt;3)]-beta-D-GlcNAc-(1-&gt;3)-beta-D-Gal-(1-&gt;4)-[alpha-L-Fuc-(1-&gt;3)]-beta-D-GlcNAc-(1-&gt;3)-beta-D-Gal-(1-&gt;4)-beta-D-GlcNAc + GDP + H(+). It catalyses the reaction alpha-Neu5Ac-(2-&gt;3)-beta-D-Gal-(1-&gt;4)-beta-D-GlcNAc-(1-&gt;3)-beta-D-Gal-(1-&gt;4)-beta-D-GlcNAc-(1-&gt;3)-beta-D-Gal-(1-&gt;4)-beta-D-GlcNAc + GDP-beta-L-fucose = alpha-Neu5Ac-(2-&gt;3)-beta-D-Gal-(1-&gt;4)-[alpha-L-Fuc-(1-&gt;3)]-beta-D-GlcNAc-(1-&gt;3)-beta-D-Gal-(1-&gt;4)-beta-D-GlcNAc-(1-&gt;3)-beta-D-Gal-(1-&gt;4)-beta-D-GlcNAc + GDP + H(+). The protein operates within protein modification; protein glycosylation. Inhibited by NaCl. Inhibited by GDP in a concentration dependent manner, with an IC(50) value of 93 uM. Also inhibited by GMP and GTP. Inhibited by N-ethylmaleimide. Activated by poly(ethylene glycol) by enhancing the thermal stability of FUT7. Activated by Mn2+, Ca2+, and Mg2+. Both panosialin A and B inhibit activity with IC(50) values of 4.8 and 5.3 ug/ml, respectively. Inhibited by gallic acid (GA) and (-)-epigallocatechin gallate (EGCG) in a time-dependent and irreversible manner with IC(50) values of 60 and 700 nM, respectively. In terms of biological role, catalyzes the transfer of L-fucose, from a guanosine diphosphate-beta-L-fucose, to the N-acetyl glucosamine (GlcNAc) of a distal alpha2,3 sialylated lactosamine unit of a glycoprotein or a glycolipid-linked sialopolylactosamines chain through an alpha-1,3 glycosidic linkage and participates in the final fucosylation step in the biosynthesis of the sialyl Lewis X (sLe(x)), a carbohydrate involved in cell and matrix adhesion during leukocyte trafficking and fertilization. In vitro, also synthesizes sialyl-dimeric-Lex structures, from VIM-2 structures and both di-fucosylated and trifucosylated structures from mono-fucosylated precursors. However does not catalyze alpha 1-3 fucosylation when an internal alpha 1-3 fucosylation is present in polylactosamine chain and the fucosylation rate of the internal GlcNAc residues is reduced once fucose has been added to the distal GlcNAc. Also catalyzes the transfer of a fucose from GDP-beta-fucose to the 6-sulfated a(2,3)sialylated substrate to produce 6-sulfo sLex mediating significant L-selectin-dependent cell adhesion. Through sialyl-Lewis(x) biosynthesis, can control SELE- and SELP-mediated cell adhesion with leukocytes and allows leukocytes tethering and rolling along the endothelial tissue thereby enabling the leukocytes to accumulate at a site of inflammation. May enhance embryo implantation through sialyl Lewis X (sLeX)-mediated adhesion of embryo cells to endometrium. May affect insulin signaling by up-regulating the phosphorylation and expression of some signaling molecules involved in the insulin-signaling pathway through SLe(x) which is present on the glycans of the INSRR alpha subunit. The protein is Alpha-(1,3)-fucosyltransferase 7 of Homo sapiens (Human).